A 260-amino-acid chain; its full sequence is Protein TONNEAU 1a (260 aa).

In terms of domain architecture, LisH spans S73–K105. Disordered stretches follow at residues T147–T224 and D236–D260. Residues E161–S175 show a composition bias toward low complexity. Residues N248–D260 show a composition bias toward basic and acidic residues.

As to quaternary structure, interacts with CEN1, LNG1/TRM2 and LNG2/TRM1 (via C-terminus).

It is found in the cytoplasm. The protein resides in the cytoskeleton. Its function is as follows. Involved in the control of the dynamic organization of the cortical cytoskeleton. May play a role in the organization of microtubule arrays at the centrosome through interaction with centrin 1 (CEN1). The polypeptide is Protein TONNEAU 1a (TON1A) (Arabidopsis thaliana (Mouse-ear cress)).